Reading from the N-terminus, the 269-residue chain is Phosphate import ATP-binding protein PstB (269 aa).

The region spanning 23–264 (IATRNLEFYY…PSKQQTEDYI (242 aa)) is the ABC transporter domain. 55-62 (GPSGCGKS) provides a ligand contact to ATP.

This sequence belongs to the ABC transporter superfamily. Phosphate importer (TC 3.A.1.7) family. As to quaternary structure, the complex is composed of two ATP-binding proteins (PstB), two transmembrane proteins (PstC and PstA) and a solute-binding protein (PstS).

Its subcellular location is the cell inner membrane. The catalysed reaction is phosphate(out) + ATP + H2O = ADP + 2 phosphate(in) + H(+). Part of the ABC transporter complex PstSACB involved in phosphate import. Responsible for energy coupling to the transport system. The polypeptide is Phosphate import ATP-binding protein PstB (Xylella fastidiosa (strain Temecula1 / ATCC 700964)).